The primary structure comprises 172 residues: Probable calcium-binding protein CML28 (172 aa).

4 EF-hand domains span residues 1–36, 37–72, 95–130, and 133–168; these read MDST…FGIF, IPDD…ILGD, DEDE…LGLK, and RTAD…GGFA. Ca(2+) is bound by residues aspartate 14, asparagine 16, aspartate 18, arginine 20, glutamate 25, aspartate 50, asparagine 52, aspartate 54, cysteine 56, glutamate 61, aspartate 108, asparagine 110, aspartate 112, glutamate 119, aspartate 146, aspartate 148, aspartate 150, arginine 152, and glutamate 157.

Potential calcium sensor. This is Probable calcium-binding protein CML28 (CML28) from Oryza sativa subsp. japonica (Rice).